Reading from the N-terminus, the 294-residue chain is UPF0761 membrane protein YPK_4186 (294 aa).

A run of 7 helical transmembrane segments spans residues 44 to 64, 67 to 87, 108 to 128, 136 to 156, 185 to 205, 212 to 232, and 246 to 266; these read LLSL…FPMF, ISIK…GDII, GLIV…NIIW, LVFS…LVGA, VFPL…VPTV, ALIG…GFAM, and VLAV…IVLL.

The protein belongs to the UPF0761 family.

The protein resides in the cell inner membrane. This chain is UPF0761 membrane protein YPK_4186, found in Yersinia pseudotuberculosis serotype O:3 (strain YPIII).